Consider the following 243-residue polypeptide: Probable transcriptional regulator ycf27 (243 aa).

The Response regulatory domain occupies 7–120 (KILVVDDEAS…ELEARIRSVL (114 aa)). Asp56 bears the 4-aspartylphosphate mark. Positions 76–94 (DVPIIMLTALGEVCDRITG) form a DNA-binding region, H-T-H motif. The segment at residues 135 to 236 (SGIISIGFLK…ARGTGYLFQR (102 aa)) is a DNA-binding region (ompR/PhoB-type).

The protein localises to the plastid. Its subcellular location is the chloroplast. Its function is as follows. Probable promoter-specific protein mediating the interaction between DNA and RNA polymerase. This chain is Probable transcriptional regulator ycf27 (ycf27), found in Pyropia yezoensis (Susabi-nori).